A 786-amino-acid polypeptide reads, in one-letter code: Endonuclease MutS2 (786 aa).

Residue 332-339 coordinates ATP; that stretch reads GPNTGGKT. Residues 711–786 enclose the Smr domain; the sequence is IDLRGMDSEE…GTGVTVVILK (76 aa).

This sequence belongs to the DNA mismatch repair MutS family. MutS2 subfamily. In terms of assembly, homodimer. Binds to stalled ribosomes, contacting rRNA.

In terms of biological role, endonuclease that is involved in the suppression of homologous recombination and thus may have a key role in the control of bacterial genetic diversity. Acts as a ribosome collision sensor, splitting the ribosome into its 2 subunits. Detects stalled/collided 70S ribosomes which it binds and splits by an ATP-hydrolysis driven conformational change. Acts upstream of the ribosome quality control system (RQC), a ribosome-associated complex that mediates the extraction of incompletely synthesized nascent chains from stalled ribosomes and their subsequent degradation. Probably generates substrates for RQC. This Clostridium perfringens (strain ATCC 13124 / DSM 756 / JCM 1290 / NCIMB 6125 / NCTC 8237 / Type A) protein is Endonuclease MutS2.